Consider the following 355-residue polypeptide: MESIFHEKQEGSLCAQHCLNNLLQGEYFSPVELSSIAHQLDEEERLRMAEGGVTSEDYRTFLQQPSGNMDDSGFFSIQVISNALKVWGLELILFNSPEYQRLRIDPINERSFICNYKEHWFTVRKLGKQWFNLNSLLTGPELISDTYLALFLAQLQQEGYSIFVVKGDLPDCEADQLLQMIKVQQMHRPKLIGEELAHLKEQSALKADLERVLEAADGPGMFDDDEDDLQRALAMSRQEIDMEDEEADLRRAIQLSMQGSSRGMCEDSPQTSSTDLSSEELRKRREAYFEKQQHQQQEADRPGYLSYPCERPTTSSGGLRSNQAGNAMSEEDVLRATVTVSLETAKDSLKAERKK.

A Peptide (Met-Gly) (interchain with G-Cter in ubiquitin) cross-link involves residue Met1. Residues 1–180 (MESIFHEKQE…DCEADQLLQM (180 aa)) enclose the Josephin domain. Catalysis depends on Cys14, which acts as the Nucleophile. His119 serves as the catalytic Proton acceptor. Residue Asn134 is part of the active site. Lys200 is covalently cross-linked (Glycyl lysine isopeptide (Lys-Gly) (interchain with G-Cter in ubiquitin)). 2 UIM domains span residues 224–243 (DDED…IDME) and 244–263 (DEEA…SSRG). The interval 257 to 333 (MQGSSRGMCE…AGNAMSEEDV (77 aa)) is disordered. Phosphoserine is present on residues Ser268, Ser272, and Ser273. Over residues 279-301 (EELRKRREAYFEKQQHQQQEADR) the composition is skewed to basic and acidic residues. Residues 312–326 (PTTSSGGLRSNQAGN) show a composition bias toward polar residues. Ser321 bears the Phosphoserine mark. Residues 329–348 (SEEDVLRATVTVSLETAKDS) form the UIM 3 domain.

Interacts with STUB1/CHIP (when monoubiquitinated). Interacts with DNA repair proteins RAD23A and RAD23B. Interacts with BECN1 (via its poly-Gln domain). Interacts with PRKN, UBR2, VCP and tubulin. Monoubiquitinated by UBE2W, possibly leading to activate the deubiquitinating enzyme activity. As to expression, ubiquitously expressed.

The protein resides in the nucleus matrix. The protein localises to the nucleus. It localises to the lysosome membrane. It carries out the reaction Thiol-dependent hydrolysis of ester, thioester, amide, peptide and isopeptide bonds formed by the C-terminal Gly of ubiquitin (a 76-residue protein attached to proteins as an intracellular targeting signal).. In terms of biological role, deubiquitinating enzyme involved in protein homeostasis maintenance, transcription, cytoskeleton regulation, myogenesis and degradation of misfolded chaperone substrates. Binds long polyubiquitin chains and trims them, while it has weak or no activity against chains of 4 or less ubiquitins. Involved in degradation of misfolded chaperone substrates via its interaction with STUB1/CHIP: recruited to monoubiquitinated STUB1/CHIP, and restricts the length of ubiquitin chain attached to STUB1/CHIP substrates and preventing further chain extension. Interacts with key regulators of transcription and represses transcription: acts as a histone-binding protein that regulates transcription. Acts as a negative regulator of mTORC1 signaling in response to amino acid deprivation by mediating deubiquitination of RHEB, thereby promoting RHEB inactivation by the TSC-TBC complex. Regulates autophagy via the deubiquitination of 'Lys-402' of BECN1 leading to the stabilization of BECN1. In Rattus norvegicus (Rat), this protein is Ataxin-3 (Atxn3).